A 153-amino-acid chain; its full sequence is Arachidonate 5-lipoxygenase-activating protein (153 aa).

Over 1-8 (MDQETVGN) the chain is Lumenal. The helical transmembrane segment at 9-30 (IVLLAIVTLISVVQNGFFAHKV) threads the bilayer. The Cytoplasmic segment spans residues 31–52 (EHESKTHNGRSFQRTGPLAFER). The helical transmembrane segment at 53-77 (VYTANQNCVDAYPTFLVMLWSAGLL) threads the bilayer. The Lumenal portion of the chain corresponds to 78 to 80 (CSQ). A helical transmembrane segment spans residues 81-102 (VPAAFAGLMYLFVRQKYFVGYL). Over 103 to 107 (GERTQ) the chain is Cytoplasmic. The stretch at 108-115 (STPGYIFG) is an intramembrane region. The chain crosses the membrane as a helical span at residues 116–128 (KRIILFLFAMSLA). The Lumenal segment spans residues 129–153 (GILNYFLIAFFGSDFENYIKTVTTT).

The protein belongs to the MAPEG family. In terms of assembly, homotrimer. Interacts with LTC4S and ALOX5.

Its subcellular location is the nucleus membrane. It localises to the endoplasmic reticulum membrane. Its function is as follows. Required for leukotriene biosynthesis by ALOX5 (5-lipoxygenase). Anchors ALOX5 to the membrane. Binds arachidonic acid, and could play an essential role in the transfer of arachidonic acid to ALOX5. Binds to MK-886, a compound that blocks the biosynthesis of leukotrienes. In Ovis aries (Sheep), this protein is Arachidonate 5-lipoxygenase-activating protein (ALOX5AP).